Reading from the N-terminus, the 1555-residue chain is Pre-mRNA cleavage complex 2 protein Pcf11 (1555 aa).

Residue Ser-2 is modified to N-acetylserine. One can recognise a CID domain in the interval 14-142 (AREDACRDYQ…ALDVRVNSLD (129 aa)). Position 120 is a phosphoserine; by WNK1 (Ser-120). Thr-121 carries the phosphothreonine; by WNK1 modification. Residues 167–186 (NKSPEEPSTPGTVVSSPSIS) are disordered. 2 positions are modified to phosphoserine: Ser-169 and Ser-182. Residues 174–186 (STPGTVVSSPSIS) are compositionally biased toward low complexity. A coiled-coil region spans residues 202 to 239 (QLIRQQLLAKQKQLLELQQKKLELELEQAKAQLAVSLS). Residues 266–648 (VKAPHQVPVQ…QQQHRLSVDA (383 aa)) form a disordered region. Residue Lys-291 forms a Glycyl lysine isopeptide (Lys-Gly) (interchain with G-Cter in SUMO2) linkage. Residues 307–317 (HGKDQSHRKEF) show a composition bias toward basic and acidic residues. A compositionally biased stretch (polar residues) spans 320 to 333 (NTLNQSDTKTSKTI). Residue Lys-328 forms a Glycyl lysine isopeptide (Lys-Gly) (interchain with G-Cter in SUMO2) linkage. Composition is skewed to basic and acidic residues over residues 342–364 (KQEK…DSKS), 380–421 (HTKD…DVKE), and 427–442 (EKKD…EHRL). Lys-456 participates in a covalent cross-link: Glycyl lysine isopeptide (Lys-Gly) (interchain with G-Cter in SUMO2). Position 459 is a phosphothreonine (Thr-459). Positions 475 to 486 (STRKRSRSRSPK) are enriched in basic residues. A phosphoserine mark is found at Ser-489, Ser-494, Ser-509, and Ser-511. Positions 494 to 508 (SPKRRDRRSPKRRQR) are enriched in basic residues. Residues 529–567 (SHMEEFTPPSREDRNAKRSTKQDIRDPRRMKKTEEERPQ) show a composition bias toward basic and acidic residues. Residues 568 to 578 (ETTNQHSTKSG) show a composition bias toward polar residues. Residues 599 to 615 (SGWEENKSLQQVDEHSK) are compositionally biased toward basic and acidic residues. Ser-645 bears the Phosphoserine mark. Lys-654 participates in a covalent cross-link: Glycyl lysine isopeptide (Lys-Gly) (interchain with G-Cter in SUMO2). A Phosphoserine modification is found at Ser-705. 2 disordered regions span residues 707–732 (FNDR…PASR) and 749–781 (RPLF…PRID). The span at 716–725 (PRYEDSDKPF) shows a compositional bias: basic and acidic residues. Lys-723 participates in a covalent cross-link: Glycyl lysine isopeptide (Lys-Gly) (interchain with G-Cter in SUMO2). Residues Ser-728 and Ser-777 each carry the phosphoserine modification. Phosphothreonine is present on Thr-785. Ser-794 bears the Phosphoserine mark. Residues Arg-805, Arg-820, and Arg-833 each carry the asymmetric dimethylarginine modification. Ser-851 carries the phosphoserine modification. Arg-929, Arg-942, Arg-955, Arg-981, Arg-994, and Arg-1007 each carry asymmetric dimethylarginine. The disordered stretch occupies residues 1056 to 1081 (HGQPGPRFERTPGQPGPQRFDGPPGQ). Asymmetric dimethylarginine is present on residues Arg-1093 and Arg-1104. Disordered regions lie at residues 1127–1147 (VSFN…NAPS) and 1159–1187 (FDSP…RASG). Phosphoserine is present on Ser-1161. A compositionally biased stretch (low complexity) spans 1162–1175 (PQGPNFNGPHGPGN). Lys-1278 participates in a covalent cross-link: Glycyl lysine isopeptide (Lys-Gly) (interchain with G-Cter in SUMO2). Over residues 1289–1298 (SATTQVSEVT) the composition is skewed to polar residues. Residues 1289-1315 (SATTQVSEVTAQPPPEEEEDQNEDQDV) are disordered. Residues 1303–1315 (PEEEEDQNEDQDV) are compositionally biased toward acidic residues. Glycyl lysine isopeptide (Lys-Gly) (interchain with G-Cter in SUMO2) cross-links involve residues Lys-1419, Lys-1511, and Lys-1524. Residues 1516–1555 (EPCDSPKVKEERIDTPPACTEESIATPSEIKTENDTVESV) form a disordered region. Over residues 1519–1529 (DSPKVKEERID) the composition is skewed to basic and acidic residues. Position 1530 is a phosphothreonine (Thr-1530). Lys-1546 is covalently cross-linked (Glycyl lysine isopeptide (Lys-Gly) (interchain with G-Cter in SUMO2)).

Associates with the phosphorylated CTD domain of POLR2A /RNA polymerase II. Post-translationally, phosphorylation at Ser-120 and/or Thr-121 by WNK1 weakens its association with POLR2A/RNA polymerase II, promoting transcript release from the chromatin template and mRNA export to the cytoplasm.

Its subcellular location is the nucleus. Its function is as follows. Component of pre-mRNA cleavage complex II, which promotes transcription termination by RNA polymerase II. This chain is Pre-mRNA cleavage complex 2 protein Pcf11, found in Homo sapiens (Human).